The primary structure comprises 177 residues: Nucleoside triphosphate/diphosphate phosphatase (177 aa).

R23 serves as the catalytic Proton donor. Mg(2+)-binding residues include N87, D103, D105, D107, D120, and E123.

It belongs to the Ntdp family. Requires Mg(2+) as cofactor.

It catalyses the reaction a ribonucleoside 5'-triphosphate + H2O = a ribonucleoside 5'-diphosphate + phosphate + H(+). It carries out the reaction a ribonucleoside 5'-diphosphate + H2O = a ribonucleoside 5'-phosphate + phosphate + H(+). In terms of biological role, has nucleoside phosphatase activity towards nucleoside triphosphates and nucleoside diphosphates. The chain is Nucleoside triphosphate/diphosphate phosphatase from Streptococcus agalactiae serotype Ia (strain ATCC 27591 / A909 / CDC SS700).